We begin with the raw amino-acid sequence, 721 residues long: Transcription activator of gluconeogenesis ARB_05058 (721 aa).

Positions 1–34 (MSPHQTTGQESDNMTVNGENAQASSQYIQSNEEM) are enriched in polar residues. Positions 1-62 (MSPHQTTGQE…PSRPKRKKAK (62 aa)) are disordered. Positions 40 to 55 (TEKKASTAKAAKDPSR) are enriched in basic and acidic residues. Residues 65 to 93 (CYACQRGHLTCGDERPCQRCIKRGFQDAC) constitute a DNA-binding region (zn(2)-C6 fungal-type). 5 disordered regions span residues 128–224 (QNNA…FNSA), 263–300 (GDTPPSESGAQRGSIGQNGSGTFGLTGSNFSESPSNQA), 353–400 (SPAS…TPQL), 533–567 (NHNVNTGGSSGLMTGSTSRGSYTPRPYSSEVYNSS), and 635–666 (GLNGEAASNETNELNGSLTNGATTNGRGQRRW). 4 stretches are compositionally biased toward polar residues: residues 133-213 (GSNT…TPSA), 267-277 (PSESGAQRGSI), 287-300 (LTGSNFSESPSNQA), and 361-379 (MMTTSSATFEDTTNSGAFN). Low complexity-rich tracts occupy residues 380 to 399 (SRQNVPVSQQRQQPVVSTPQ) and 543 to 553 (GLMTGSTSRGS). A compositionally biased stretch (polar residues) spans 640–661 (AASNETNELNGSLTNGATTNGR).

This sequence belongs to the ERT1/acuK family.

It localises to the nucleus. Transcription factor which regulates nonfermentable carbon utilization. Activator of gluconeogenetic genes. The polypeptide is Transcription activator of gluconeogenesis ARB_05058 (Arthroderma benhamiae (strain ATCC MYA-4681 / CBS 112371) (Trichophyton mentagrophytes)).